Consider the following 398-residue polypeptide: MKALKKVSNILCVLGLCTLMGGTSYAWDGKKDGTGTHSLIAEHGLSMLNNDLSGNESQQVKDNIKILNEYLGDLKLGSTYPDYDPNAYDLYQDHFYDPDTGNNFTIDNSWYASYPIYDTSRNSVRKFATLAKNEWEKGNFKEATFLLGQGLHYLGDLNTPYHASNVTAVDSPGHVKYETFVEERKDNYALNTSGNDTTSGVYKEAMENPSFNKWMTQNSIKYAKIAKDLYYSHSTMSHSWDDWDYSGREAIKNSQVCTAGFLYRFMNEVSNGNTGDNDSLTNEFNIVLKTADNKYAGTDDNVYFGFETNEGKKFEWKLDNAGNDFERNQVDNYILKTKDGEEVDINNISNYWIRKERLTSISDDWELSNFKLIANGKVIQQQDVNKVFTGNETYYINK.

The N-terminal stretch at 1–26 (MKALKKVSNILCVLGLCTLMGGTSYA) is a signal peptide. Positions 27, 37, 82, 94, 152, 156, 162, 174, and 178 each coordinate Zn(2+). A Zn-dependent PLC domain is found at 27–276 (WDGKKDGTGT…NEVSNGNTGD (250 aa)). The interval 273-281 (NTGDNDSLT) is linker. Residues 282 to 398 (NEFNIVLKTA…TGNETYYINK (117 aa)) form the PLAT domain. Ca(2+) is bound by residues Gly297, Thr298, Asp299, Asp319, Asn320, Gly322, Asn323, Asp324, and Asp363.

The protein belongs to the bacterial zinc-metallophospholipase C family. Requires Ca(2+) as cofactor. Zn(2+) serves as cofactor.

It localises to the secreted. It catalyses the reaction a 1,2-diacyl-sn-glycero-3-phosphocholine + H2O = phosphocholine + a 1,2-diacyl-sn-glycerol + H(+). Bacterial hemolysins are exotoxins that attack blood cell membranes and cause cell rupture. Binds to eukaryotic membranes where it hydrolyzes phosphatidylcholine. This enzyme has 10-fold less activity towards sphingomyelin than its C.perfringens counterpart, is approximately 100-fold less hemolytic against mouse erythrocytes and at least 100-fold less toxic in mice. The protein is Phospholipase C (plc) of Paraclostridium bifermentans (Clostridium bifermentans).